Consider the following 106-residue polypeptide: METLDYRFEGHTAVQFPRGAVLVGVLASGNLEILLEPAALDGAMTVRIITAAKGFGSVWQAVISDFAQRHPLRDVRISINDAGATPAVVSLRLDQAVETLLAGEPR.

Ser28 is modified (O-(phosphoribosyl dephospho-coenzyme A)serine).

The protein belongs to the MdcC family. In terms of processing, covalently binds the prosthetic group of malonate decarboxylase.

The protein localises to the cytoplasm. Its function is as follows. Subunit of malonate decarboxylase, it is an acyl carrier protein to which acetyl and malonyl thioester residues are bound via a 2'-(5''-phosphoribosyl)-3'-dephospho-CoA prosthetic group and turn over during the catalytic mechanism. The protein is Malonate decarboxylase acyl carrier protein of Stenotrophomonas maltophilia (strain K279a).